The chain runs to 237 residues: Glutathione S-transferase L1 (237 aa).

Residues 29-110 (GTTRLYISYT…YVDSNFDGPS (82 aa)) form the GST N-terminal domain. Glutathione is bound by residues 39 to 40 (CP), 67 to 68 (NR), 81 to 82 (KV), and 94 to 95 (ES). Residues 112–232 (YPEDSAKREF…KTDSEYVVNY (121 aa)) enclose the GST C-terminal domain.

The protein belongs to the GST superfamily. Lambda family.

It localises to the cytoplasm. The protein localises to the cytosol. It carries out the reaction RX + glutathione = an S-substituted glutathione + a halide anion + H(+). In terms of biological role, catalyzes the glutathione-dependent reduction of S-glutathionylquercetin to quercetin. In vitro, possesses glutathione-dependent thiol transferase activity toward 2-hydroxyethyl disulfide (HED). This is Glutathione S-transferase L1 (GSTL1) from Arabidopsis thaliana (Mouse-ear cress).